A 48-amino-acid chain; its full sequence is Putative protein P' (48 aa).

The polypeptide is Putative protein P' (Bos taurus (Bovine)).